Here is a 178-residue protein sequence, read N- to C-terminus: Bifunctional protein PyrR (178 aa).

Residues 99 to 111 (VVLVDDVIFKGRT) carry the PRPP-binding motif.

Belongs to the purine/pyrimidine phosphoribosyltransferase family. PyrR subfamily.

The enzyme catalyses UMP + diphosphate = 5-phospho-alpha-D-ribose 1-diphosphate + uracil. In terms of biological role, regulates the transcription of the pyrimidine nucleotide (pyr) operon in response to exogenous pyrimidines. Functionally, also displays a weak uracil phosphoribosyltransferase activity which is not physiologically significant. The polypeptide is Bifunctional protein PyrR (Nostoc punctiforme (strain ATCC 29133 / PCC 73102)).